A 131-amino-acid polypeptide reads, in one-letter code: Large ribosomal subunit protein eL14 (131 aa).

Belongs to the eukaryotic ribosomal protein eL14 family. In terms of assembly, component of the large ribosomal subunit. Mature ribosomes consist of a small (40S) and a large (60S) subunit. The 40S subunit contains about 32 different proteins and 1 molecule of RNA (18S). The 60S subunit contains 45 different proteins and 3 molecules of RNA (25S, 5.8S and 5S).

It is found in the cytoplasm. Functionally, component of the ribosome, a large ribonucleoprotein complex responsible for the synthesis of proteins in the cell. The small ribosomal subunit (SSU) binds messenger RNAs (mRNAs) and translates the encoded message by selecting cognate aminoacyl-transfer RNA (tRNA) molecules. The large subunit (LSU) contains the ribosomal catalytic site termed the peptidyl transferase center (PTC), which catalyzes the formation of peptide bonds, thereby polymerizing the amino acids delivered by tRNAs into a polypeptide chain. The nascent polypeptides leave the ribosome through a tunnel in the LSU and interact with protein factors that function in enzymatic processing, targeting, and the membrane insertion of nascent chains at the exit of the ribosomal tunnel. This chain is Large ribosomal subunit protein eL14, found in Candida albicans (strain SC5314 / ATCC MYA-2876) (Yeast).